A 691-amino-acid polypeptide reads, in one-letter code: Elongation factor G (691 aa).

In terms of domain architecture, tr-type G spans 8–282; sequence EQTRNIGIMA…AVIDYLPAPT (275 aa). Residues 17 to 24, 81 to 85, and 135 to 138 contribute to the GTP site; these read AHIDAGKT, DTPGH, and NKMD.

The protein belongs to the TRAFAC class translation factor GTPase superfamily. Classic translation factor GTPase family. EF-G/EF-2 subfamily.

It localises to the cytoplasm. Its function is as follows. Catalyzes the GTP-dependent ribosomal translocation step during translation elongation. During this step, the ribosome changes from the pre-translocational (PRE) to the post-translocational (POST) state as the newly formed A-site-bound peptidyl-tRNA and P-site-bound deacylated tRNA move to the P and E sites, respectively. Catalyzes the coordinated movement of the two tRNA molecules, the mRNA and conformational changes in the ribosome. This is Elongation factor G from Natranaerobius thermophilus (strain ATCC BAA-1301 / DSM 18059 / JW/NM-WN-LF).